A 104-amino-acid polypeptide reads, in one-letter code: Small ribosomal subunit protein uS10 (104 aa).

The protein belongs to the universal ribosomal protein uS10 family. Part of the 30S ribosomal subunit.

In terms of biological role, involved in the binding of tRNA to the ribosomes. The polypeptide is Small ribosomal subunit protein uS10 (Hydrogenobaculum sp. (strain Y04AAS1)).